A 138-amino-acid polypeptide reads, in one-letter code: MRTLWILAVLLLGVKGNLLQFEMMINKMAGRSGIRWYSDYGCYCGKGGHGQPQDATDRCCFVHDCCYGKVSGCDPKMAFYKYSSDKNDIVCGGNNPCLKEICECDRAAAICFRDNLSTYDNKYWNVPSETCQVESEPC.

The N-terminal stretch at 1 to 16 (MRTLWILAVLLLGVKG) is a signal peptide. 7 cysteine pairs are disulfide-bonded: C42/C131, C44/C60, C59/C111, C65/C138, C66/C104, C73/C97, and C91/C102. Ca(2+) is bound by residues Y43, G45, and G47. The active site involves H63. Residue D64 participates in Ca(2+) binding. The active site involves D105.

In terms of assembly, monomer. The cofactor is Ca(2+). In terms of tissue distribution, expressed by the venom gland.

Its subcellular location is the secreted. The enzyme catalyses a 1,2-diacyl-sn-glycero-3-phosphocholine + H2O = a 1-acyl-sn-glycero-3-phosphocholine + a fatty acid + H(+). Its function is as follows. Snake venom phospholipase A2 (PLA2) that impairs hemostasis. It weakly inhibits ADP-induced platelet aggregation when tested on platelet rich plasma from human and rabbit blood (15-25% of inhibition at 5-10 ug of enzyme), and dose-dependently inhibits blood coagulation, possibly by inhibiting thrombin activation. Exhibits high hydrolytic activities toward L-dipalmitoyl phosphatidylcholine. PLA2 catalyzes the calcium-dependent hydrolysis of the 2-acyl groups in 3-sn-phosphoglycerides. The chain is Acidic phospholipase A2 Tbo-E6 from Craspedocephalus borneensis (Borneo pit viper).